The primary structure comprises 187 residues: Probable GTP-binding protein EngB (187 aa).

The 170-residue stretch at 18-187 (KNSEIAFWGR…KLKENINSNF (170 aa)) folds into the EngB-type G domain. GTP is bound by residues 26–33 (GRSNVGKS), 52–56 (GRTQL), 70–73 (DLPG), 137–140 (TKID), and 168–170 (VSS). Serine 33 and threonine 54 together coordinate Mg(2+).

This sequence belongs to the TRAFAC class TrmE-Era-EngA-EngB-Septin-like GTPase superfamily. EngB GTPase family. The cofactor is Mg(2+).

Functionally, necessary for normal cell division and for the maintenance of normal septation. The sequence is that of Probable GTP-binding protein EngB from Mycoplasmopsis synoviae (strain 53) (Mycoplasma synoviae).